The sequence spans 416 residues: Squalene synthase (416 aa).

NADP(+)-binding residues include arginine 52 and arginine 77. Positions 80, 83, and 84 each coordinate Mg(2+). Arginine 218 contacts NADP(+). Residues 284 to 304 form a helical membrane-spanning segment; it reads SVFNFCAIPQVMAIATLAACY. Residues lysine 315 and arginine 317 each coordinate NADP(+). The chain crosses the membrane as a helical span at residues 384–404; sequence PIYLSFIMLLAALSWQYLSTL.

Belongs to the phytoene/squalene synthase family. It depends on Mg(2+) as a cofactor.

Its subcellular location is the endoplasmic reticulum membrane. The catalysed reaction is 2 (2E,6E)-farnesyl diphosphate + NADPH + H(+) = squalene + 2 diphosphate + NADP(+). It carries out the reaction 2 (2E,6E)-farnesyl diphosphate + NADH + H(+) = squalene + 2 diphosphate + NAD(+). It catalyses the reaction presqualene diphosphate + NADH + H(+) = squalene + diphosphate + NAD(+). The enzyme catalyses presqualene diphosphate + NADPH + H(+) = squalene + diphosphate + NADP(+). The catalysed reaction is 2 (2E,6E)-farnesyl diphosphate = presqualene diphosphate + diphosphate. Its pathway is terpene metabolism; lanosterol biosynthesis; lanosterol from farnesyl diphosphate: step 1/3. Catalyzes the condensation of 2 farnesyl pyrophosphate (FPP) moieties to form squalene. Proceeds in two distinct steps. In the first half-reaction, two molecules of FPP react to form the stable presqualene diphosphate intermediate (PSQPP), with concomitant release of a proton and a molecule of inorganic diphosphate. In the second half-reaction, PSQPP undergoes heterolysis, isomerization, and reduction with NADPH or NADH to form squalene. It is the first committed enzyme of the sterol biosynthesis pathway. The protein is Squalene synthase (Fdft1) of Rattus norvegicus (Rat).